Reading from the N-terminus, the 272-residue chain is NAD kinase (272 aa).

The active-site Proton acceptor is Asp-50. Residues Asp-50–Gly-51, Asn-126–Glu-127, Arg-152, Asp-154, Thr-165–Ser-170, and Ala-189 each bind NAD(+).

It belongs to the NAD kinase family. A divalent metal cation is required as a cofactor.

It localises to the cytoplasm. It catalyses the reaction NAD(+) + ATP = ADP + NADP(+) + H(+). In terms of biological role, involved in the regulation of the intracellular balance of NAD and NADP, and is a key enzyme in the biosynthesis of NADP. Catalyzes specifically the phosphorylation on 2'-hydroxyl of the adenosine moiety of NAD to yield NADP. The polypeptide is NAD kinase (Streptococcus pneumoniae (strain 70585)).